We begin with the raw amino-acid sequence, 479 residues long: Poly(A) polymerase catalytic subunit (479 aa).

Residues Asp-202 and Asp-204 contribute to the active site. The Ca(2+) site is built by Asp-202, Asp-204, and Asp-253.

It belongs to the poxviridae poly(A) polymerase catalytic subunit family. Heterodimer of a large (catalytic) subunit and a small (regulatory) subunit.

It carries out the reaction RNA(n) + ATP = RNA(n)-3'-adenine ribonucleotide + diphosphate. In terms of biological role, polymerase that creates the 3'-poly(A) tail of mRNA's. This is Poly(A) polymerase catalytic subunit (OPG063) from Bos taurus (Bovine).